A 283-amino-acid chain; its full sequence is Serine/threonine-protein phosphatase Pgam5, mitochondrial (283 aa).

Residues 7–23 (MYGLPSAAVAVGTALLN) traverse the membrane as a helical segment.

Belongs to the phosphoglycerate mutase family. BPG-dependent PGAM subfamily. Interacts with skn-1.

The protein localises to the mitochondrion outer membrane. It carries out the reaction O-phospho-L-seryl-[protein] + H2O = L-seryl-[protein] + phosphate. It catalyses the reaction O-phospho-L-threonyl-[protein] + H2O = L-threonyl-[protein] + phosphate. Its function is as follows. Displays phosphatase activity for serine/threonine residues. Has apparently no phosphoglycerate mutase activity. The chain is Serine/threonine-protein phosphatase Pgam5, mitochondrial (pgam-5) from Caenorhabditis briggsae.